A 398-amino-acid polypeptide reads, in one-letter code: Serine/threonine-protein kinase ppk23 (398 aa).

In terms of domain architecture, Protein kinase spans 74–359; that stretch reads YEILEKIEEG…AKEALEHPYF (286 aa). Residues 80-88 and lysine 103 contribute to the ATP site; that span reads IEEGSYGIV. Aspartate 198 (proton acceptor) is an active-site residue. The tract at residues 359–398 is disordered; it reads FYESPRPKDPKFFPTFPSKAKGESKEKNVFQSFRSASPKK. The span at 387–398 shows a compositional bias: polar residues; that stretch reads VFQSFRSASPKK.

The protein belongs to the protein kinase superfamily. Ser/Thr protein kinase family.

It is found in the nucleus. The catalysed reaction is L-seryl-[protein] + ATP = O-phospho-L-seryl-[protein] + ADP + H(+). The enzyme catalyses L-threonyl-[protein] + ATP = O-phospho-L-threonyl-[protein] + ADP + H(+). This is Serine/threonine-protein kinase ppk23 (ppk23) from Schizosaccharomyces pombe (strain 972 / ATCC 24843) (Fission yeast).